The primary structure comprises 127 residues: MAAAGARGLRATYHRLMDKVELLLPKKLRPLYNHPAGPRTVFFWAPIMKWGLVCAGLADMARPAEKLSTAQSTVLMATGFIWSRYSLVIIPKNWSLFAVNFFVGSAGASQLFRIWRYNQELKSKGIQ.

Residues 2–40 lie on the Mitochondrial matrix side of the membrane; it reads AAAGARGLRATYHRLMDKVELLLPKKLRPLYNHPAGPRT. Lys-26 carries the post-translational modification N6-acetyllysine. A helical membrane pass occupies residues 41–61; the sequence is VFFWAPIMKWGLVCAGLADMA. The Mitochondrial intermembrane portion of the chain corresponds to 62 to 72; it reads RPAEKLSTAQS. The helical transmembrane segment at 73-90 threads the bilayer; the sequence is TVLMATGFIWSRYSLVII. Over 91 to 92 the chain is Mitochondrial matrix; that stretch reads PK. The chain crosses the membrane as a helical span at residues 93–115; sequence NWSLFAVNFFVGSAGASQLFRIW. Over 116–127 the chain is Mitochondrial intermembrane; sequence RYNQELKSKGIQ.

The protein belongs to the mitochondrial pyruvate carrier (MPC) (TC 2.A.105) family. In terms of assembly, homodimer. Homooligomer. Forms heterodimers with MPC1 and MPC1L. The heterodimer is the more stable and dominant form.

It localises to the mitochondrion inner membrane. It catalyses the reaction pyruvate(out) + H(+)(out) = pyruvate(in) + H(+)(in). In terms of biological role, mediates the uptake of pyruvate into mitochondria. The protein is Mitochondrial pyruvate carrier 2 (Mpc2) of Mus musculus (Mouse).